A 262-amino-acid polypeptide reads, in one-letter code: Pyridoxine 5'-phosphate synthase (262 aa).

Asparagine 6 lines the 3-amino-2-oxopropyl phosphate pocket. Residue 8 to 9 participates in 1-deoxy-D-xylulose 5-phosphate binding; that stretch reads DH. Arginine 17 lines the 3-amino-2-oxopropyl phosphate pocket. Catalysis depends on histidine 43, which acts as the Proton acceptor. Arginine 45 and histidine 50 together coordinate 1-deoxy-D-xylulose 5-phosphate. Glutamate 70 serves as the catalytic Proton acceptor. Position 102 (threonine 102) interacts with 1-deoxy-D-xylulose 5-phosphate. The active-site Proton donor is the histidine 215. Residues glycine 216 and 237-238 contribute to the 3-amino-2-oxopropyl phosphate site; that span reads GH.

This sequence belongs to the PNP synthase family. Homooctamer; tetramer of dimers.

It localises to the cytoplasm. The catalysed reaction is 3-amino-2-oxopropyl phosphate + 1-deoxy-D-xylulose 5-phosphate = pyridoxine 5'-phosphate + phosphate + 2 H2O + H(+). It functions in the pathway cofactor biosynthesis; pyridoxine 5'-phosphate biosynthesis; pyridoxine 5'-phosphate from D-erythrose 4-phosphate: step 5/5. Its function is as follows. Catalyzes the complicated ring closure reaction between the two acyclic compounds 1-deoxy-D-xylulose-5-phosphate (DXP) and 3-amino-2-oxopropyl phosphate (1-amino-acetone-3-phosphate or AAP) to form pyridoxine 5'-phosphate (PNP) and inorganic phosphate. In Helicobacter pylori (strain G27), this protein is Pyridoxine 5'-phosphate synthase.